Consider the following 263-residue polypeptide: Copper homeostasis protein cutC homolog (263 aa).

The protein belongs to the CutC family.

Its function is as follows. Involved in copper homeostasis. The chain is Copper homeostasis protein cutC homolog from Drosophila melanogaster (Fruit fly).